The sequence spans 1358 residues: Phosphoribosylformylglycinamidine synthase (1358 aa).

Position 2 is an N-acetylthreonine (T2). The disordered stretch occupies residues 339 to 363 (AVSPFPGAATGSGGEIRDEGATGRG). ATP-binding positions include 345–356 (GAATGSGGEIRD), 424–426 (NGY), and A719. Positions 720, 762, 766, and 930 each coordinate Mg(2+). S932 serves as a coordination point for ATP. Positions 1093-1358 (VAILREQGVN…LFRSARRWVG (266 aa)) constitute a Glutamine amidotransferase type-1 domain. The active-site Nucleophile is C1187. Active-site residues include H1319 and E1321.

The protein in the N-terminal section; belongs to the FGAMS family.

It is found in the cytoplasm. The catalysed reaction is N(2)-formyl-N(1)-(5-phospho-beta-D-ribosyl)glycinamide + L-glutamine + ATP + H2O = 2-formamido-N(1)-(5-O-phospho-beta-D-ribosyl)acetamidine + L-glutamate + ADP + phosphate + H(+). It participates in purine metabolism; IMP biosynthesis via de novo pathway; 5-amino-1-(5-phospho-D-ribosyl)imidazole from N(2)-formyl-N(1)-(5-phospho-D-ribosyl)glycinamide: step 1/2. Its function is as follows. Phosphoribosylformylglycinamidine synthase involved in the purines biosynthetic pathway. Catalyzes the ATP-dependent conversion of formylglycinamide ribonucleotide (FGAR) and glutamine to yield formylglycinamidine ribonucleotide (FGAM) and glutamate. In Saccharomyces cerevisiae (strain ATCC 204508 / S288c) (Baker's yeast), this protein is Phosphoribosylformylglycinamidine synthase (ADE6).